An 89-amino-acid polypeptide reads, in one-letter code: Small ribosomal subunit protein uS15 (89 aa).

It belongs to the universal ribosomal protein uS15 family. Part of the 30S ribosomal subunit. Forms a bridge to the 50S subunit in the 70S ribosome, contacting the 23S rRNA.

Its function is as follows. One of the primary rRNA binding proteins, it binds directly to 16S rRNA where it helps nucleate assembly of the platform of the 30S subunit by binding and bridging several RNA helices of the 16S rRNA. Functionally, forms an intersubunit bridge (bridge B4) with the 23S rRNA of the 50S subunit in the ribosome. The chain is Small ribosomal subunit protein uS15 from Mycobacterium avium (strain 104).